A 315-amino-acid chain; its full sequence is Methionyl-tRNA formyltransferase (315 aa).

113-116 (SLLP) provides a ligand contact to (6S)-5,6,7,8-tetrahydrofolate.

The protein belongs to the Fmt family.

It carries out the reaction L-methionyl-tRNA(fMet) + (6R)-10-formyltetrahydrofolate = N-formyl-L-methionyl-tRNA(fMet) + (6S)-5,6,7,8-tetrahydrofolate + H(+). Functionally, attaches a formyl group to the free amino group of methionyl-tRNA(fMet). The formyl group appears to play a dual role in the initiator identity of N-formylmethionyl-tRNA by promoting its recognition by IF2 and preventing the misappropriation of this tRNA by the elongation apparatus. This Yersinia pseudotuberculosis serotype O:1b (strain IP 31758) protein is Methionyl-tRNA formyltransferase.